A 332-amino-acid polypeptide reads, in one-letter code: Biotin synthase (332 aa).

The Radical SAM core domain maps to 47-273; sequence YYGNKVKLNM…MNPTKEIRIA (227 aa). The [4Fe-4S] cluster site is built by cysteine 65, cysteine 69, and cysteine 72. 4 residues coordinate [2Fe-2S] cluster: cysteine 109, cysteine 141, cysteine 201, and arginine 271.

The protein belongs to the radical SAM superfamily. Biotin synthase family. Homodimer. It depends on [4Fe-4S] cluster as a cofactor. The cofactor is [2Fe-2S] cluster.

The catalysed reaction is (4R,5S)-dethiobiotin + (sulfur carrier)-SH + 2 reduced [2Fe-2S]-[ferredoxin] + 2 S-adenosyl-L-methionine = (sulfur carrier)-H + biotin + 2 5'-deoxyadenosine + 2 L-methionine + 2 oxidized [2Fe-2S]-[ferredoxin]. The protein operates within cofactor biosynthesis; biotin biosynthesis; biotin from 7,8-diaminononanoate: step 2/2. Its function is as follows. Catalyzes the conversion of dethiobiotin (DTB) to biotin by the insertion of a sulfur atom into dethiobiotin via a radical-based mechanism. The sequence is that of Biotin synthase from Geobacillus thermodenitrificans (strain NG80-2).